A 99-amino-acid chain; its full sequence is Protein translation factor SUI1 homolog (99 aa).

Belongs to the SUI1 family.

The sequence is that of Protein translation factor SUI1 homolog from Sulfolobus acidocaldarius (strain ATCC 33909 / DSM 639 / JCM 8929 / NBRC 15157 / NCIMB 11770).